The chain runs to 486 residues: Cardiolipin synthase A (486 aa).

Helical transmembrane passes span 3–23 and 38–58; these read TFYT…IAGV and MAWL…YLSL. PLD phosphodiesterase domains are found at residues 219–246 and 399–426; these read MDLR…VDPR and EGGL…DMRS. Active-site residues include His224, Lys226, Asp231, His404, Lys406, and Asp411.

The protein belongs to the phospholipase D family. Cardiolipin synthase subfamily. ClsA sub-subfamily.

The protein resides in the cell inner membrane. The enzyme catalyses 2 a 1,2-diacyl-sn-glycero-3-phospho-(1'-sn-glycerol) = a cardiolipin + glycerol. In terms of biological role, catalyzes the reversible phosphatidyl group transfer from one phosphatidylglycerol molecule to another to form cardiolipin (CL) (diphosphatidylglycerol) and glycerol. The chain is Cardiolipin synthase A from Erwinia tasmaniensis (strain DSM 17950 / CFBP 7177 / CIP 109463 / NCPPB 4357 / Et1/99).